Here is a 507-residue protein sequence, read N- to C-terminus: Maturase K (507 aa).

The protein belongs to the intron maturase 2 family. MatK subfamily.

It is found in the plastid. It localises to the chloroplast. Functionally, usually encoded in the trnK tRNA gene intron. Probably assists in splicing its own and other chloroplast group II introns. The protein is Maturase K of Humulus lupulus (European hop).